The sequence spans 154 residues: Myoglobin (154 aa).

The 147-residue stretch at 2–148 folds into the Globin domain; that stretch reads GLSDGEWQLV…FRKDIAAKYK (147 aa). Position 4 is a phosphoserine (Ser4). His65 contacts nitrite. Residue His65 coordinates O2. Phosphothreonine is present on Thr68. Residue His94 participates in heme b binding.

Belongs to the globin family. Monomeric.

It localises to the cytoplasm. Its subcellular location is the sarcoplasm. The enzyme catalyses Fe(III)-heme b-[protein] + nitric oxide + H2O = Fe(II)-heme b-[protein] + nitrite + 2 H(+). The catalysed reaction is H2O2 + AH2 = A + 2 H2O. In terms of biological role, monomeric heme protein which primary function is to store oxygen and facilitate its diffusion within muscle tissues. Reversibly binds oxygen through a pentacoordinated heme iron and enables its timely and efficient release as needed during periods of heightened demand. Depending on the oxidative conditions of tissues and cells, and in addition to its ability to bind oxygen, it also has a nitrite reductase activity whereby it regulates the production of bioactive nitric oxide. Under stress conditions, like hypoxia and anoxia, it also protects cells against reactive oxygen species thanks to its pseudoperoxidase activity. The protein is Myoglobin (MB) of Peponocephala electra (Melon-headed whale).